The chain runs to 395 residues: Acetate kinase (395 aa).

Mg(2+) is bound at residue Asn7. Lys14 contributes to the ATP binding site. Arg90 contributes to the substrate binding site. Asp147 serves as the catalytic Proton donor/acceptor. Residues 207-211 (HLGNG), 282-284 (DFR), and 330-334 (GLGEN) contribute to the ATP site. Glu383 contacts Mg(2+).

Belongs to the acetokinase family. Homodimer. Requires Mg(2+) as cofactor. The cofactor is Mn(2+).

The protein resides in the cytoplasm. The catalysed reaction is acetate + ATP = acetyl phosphate + ADP. It participates in metabolic intermediate biosynthesis; acetyl-CoA biosynthesis; acetyl-CoA from acetate: step 1/2. Catalyzes the formation of acetyl phosphate from acetate and ATP. Can also catalyze the reverse reaction. This Lachnoclostridium phytofermentans (strain ATCC 700394 / DSM 18823 / ISDg) (Clostridium phytofermentans) protein is Acetate kinase.